Here is a 346-residue protein sequence, read N- to C-terminus: Ribosomal RNA small subunit methyltransferase H (346 aa).

S-adenosyl-L-methionine is bound by residues 46 to 48 (GGY), D63, F90, D113, and Q120. Residues 270–327 (GGSAGSRHMPETHMRLPSFTPAVKGAVGPTPEEEERNPRARSAKLRAGIRTENSPLED) form a disordered region.

It belongs to the methyltransferase superfamily. RsmH family.

The protein localises to the cytoplasm. The enzyme catalyses cytidine(1402) in 16S rRNA + S-adenosyl-L-methionine = N(4)-methylcytidine(1402) in 16S rRNA + S-adenosyl-L-homocysteine + H(+). Functionally, specifically methylates the N4 position of cytidine in position 1402 (C1402) of 16S rRNA. This is Ribosomal RNA small subunit methyltransferase H from Brucella ovis (strain ATCC 25840 / 63/290 / NCTC 10512).